The chain runs to 61 residues: Large ribosomal subunit protein bL33 (61 aa).

Belongs to the bacterial ribosomal protein bL33 family.

The sequence is that of Large ribosomal subunit protein bL33 from Amoebophilus asiaticus (strain 5a2).